Consider the following 194-residue polypeptide: dTTP/UTP pyrophosphatase (194 aa).

The Proton acceptor role is filled by D68.

It belongs to the Maf family. YhdE subfamily. Requires a divalent metal cation as cofactor.

It localises to the cytoplasm. It carries out the reaction dTTP + H2O = dTMP + diphosphate + H(+). It catalyses the reaction UTP + H2O = UMP + diphosphate + H(+). Functionally, nucleoside triphosphate pyrophosphatase that hydrolyzes dTTP and UTP. May have a dual role in cell division arrest and in preventing the incorporation of modified nucleotides into cellular nucleic acids. This chain is dTTP/UTP pyrophosphatase, found in Clostridioides difficile (strain 630) (Peptoclostridium difficile).